A 130-amino-acid chain; its full sequence is Small ribosomal subunit protein uS9 (130 aa).

It belongs to the universal ribosomal protein uS9 family.

The protein is Small ribosomal subunit protein uS9 of Geobacillus thermodenitrificans (strain NG80-2).